Here is a 403-residue protein sequence, read N- to C-terminus: Phosphopentomutase (403 aa).

6 residues coordinate Mn(2+): aspartate 13, aspartate 298, histidine 303, aspartate 339, histidine 340, and histidine 351.

It belongs to the phosphopentomutase family. Mn(2+) serves as cofactor.

Its subcellular location is the cytoplasm. The enzyme catalyses 2-deoxy-alpha-D-ribose 1-phosphate = 2-deoxy-D-ribose 5-phosphate. It catalyses the reaction alpha-D-ribose 1-phosphate = D-ribose 5-phosphate. It participates in carbohydrate degradation; 2-deoxy-D-ribose 1-phosphate degradation; D-glyceraldehyde 3-phosphate and acetaldehyde from 2-deoxy-alpha-D-ribose 1-phosphate: step 1/2. In terms of biological role, isomerase that catalyzes the conversion of deoxy-ribose 1-phosphate (dRib-1-P) and ribose 1-phosphate (Rib-1-P) to deoxy-ribose 5-phosphate (dRib-5-P) and ribose 5-phosphate (Rib-5-P), respectively. The sequence is that of Phosphopentomutase from Streptococcus pneumoniae serotype 19F (strain G54).